The sequence spans 142 residues: Transcriptional regulator MraZ (142 aa).

SpoVT-AbrB domains are found at residues 5-47 and 76-119; these read NYQH…TNQE and SLTV…DINA.

Belongs to the MraZ family. As to quaternary structure, forms oligomers.

Its subcellular location is the cytoplasm. The protein localises to the nucleoid. The sequence is that of Transcriptional regulator MraZ from Mycoplasmoides gallisepticum (strain R(low / passage 15 / clone 2)) (Mycoplasma gallisepticum).